The primary structure comprises 267 residues: Dihydropteroate synthase (267 aa).

In terms of domain architecture, Pterin-binding spans 1 to 251 (MTKTKIMGIL…NVELNAKLAK (251 aa)). Position 11 (Asn11) interacts with Mg(2+). (7,8-dihydropterin-6-yl)methyl diphosphate-binding positions include Thr51, Asp84, Asn103, Asp167, Lys203, and 239–241 (RVH).

Belongs to the DHPS family. As to quaternary structure, homodimer. Requires Mg(2+) as cofactor.

The catalysed reaction is (7,8-dihydropterin-6-yl)methyl diphosphate + 4-aminobenzoate = 7,8-dihydropteroate + diphosphate. Its pathway is cofactor biosynthesis; tetrahydrofolate biosynthesis; 7,8-dihydrofolate from 2-amino-4-hydroxy-6-hydroxymethyl-7,8-dihydropteridine diphosphate and 4-aminobenzoate: step 1/2. In terms of biological role, catalyzes the condensation of para-aminobenzoate (pABA) with 6-hydroxymethyl-7,8-dihydropterin diphosphate (DHPt-PP) to form 7,8-dihydropteroate (H2Pte), the immediate precursor of folate derivatives. This chain is Dihydropteroate synthase (folP), found in Staphylococcus aureus (strain MSSA476).